Reading from the N-terminus, the 293-residue chain is Energy-coupling factor transporter ATP-binding protein EcfA2 (293 aa).

Residues 3–246 (ITFQKVEHRY…ADELEKIGVD (244 aa)) form the ABC transporter domain. 40–47 (GHTGSGKS) contacts ATP.

It belongs to the ABC transporter superfamily. Energy-coupling factor EcfA family. As to quaternary structure, forms a stable energy-coupling factor (ECF) transporter complex composed of 2 membrane-embedded substrate-binding proteins (S component), 2 ATP-binding proteins (A component) and 2 transmembrane proteins (T component).

It localises to the cell membrane. Functionally, ATP-binding (A) component of a common energy-coupling factor (ECF) ABC-transporter complex. Unlike classic ABC transporters this ECF transporter provides the energy necessary to transport a number of different substrates. In Bacillus cereus (strain ZK / E33L), this protein is Energy-coupling factor transporter ATP-binding protein EcfA2.